A 197-amino-acid chain; its full sequence is Recombination protein RecR (197 aa).

The C4-type zinc-finger motif lies at 56 to 71 (CKRCGSYAETEICNIC). One can recognise a Toprim domain in the interval 79 to 174 (HTFCVVEQPE…DVTRIAYGIT (96 aa)).

It belongs to the RecR family.

May play a role in DNA repair. It seems to be involved in an RecBC-independent recombinational process of DNA repair. It may act with RecF and RecO. The protein is Recombination protein RecR of Leptospira borgpetersenii serovar Hardjo-bovis (strain JB197).